The following is an 89-amino-acid chain: MALLSFLFNSKPKTASAAKERLQIIIARERNGRAGPDFLPALHQELIAVISKYVKVNPDDIKISLNSQGNLEVLDVNVVLPDDAIEAVK.

This sequence belongs to the MinE family.

In terms of biological role, prevents the cell division inhibition by proteins MinC and MinD at internal division sites while permitting inhibition at polar sites. This ensures cell division at the proper site by restricting the formation of a division septum at the midpoint of the long axis of the cell. This is Cell division topological specificity factor from Janthinobacterium sp. (strain Marseille) (Minibacterium massiliensis).